Consider the following 210-residue polypeptide: Holliday junction resolvase RecU (210 aa).

Mg(2+) contacts are provided by Thr-87, Asp-89, Glu-102, and Gln-121.

The protein belongs to the RecU family. The cofactor is Mg(2+).

It is found in the cytoplasm. The enzyme catalyses Endonucleolytic cleavage at a junction such as a reciprocal single-stranded crossover between two homologous DNA duplexes (Holliday junction).. Its function is as follows. Endonuclease that resolves Holliday junction intermediates in genetic recombination. Cleaves mobile four-strand junctions by introducing symmetrical nicks in paired strands. Promotes annealing of linear ssDNA with homologous dsDNA. Required for DNA repair, homologous recombination and chromosome segregation. The protein is Holliday junction resolvase RecU of Lactobacillus delbrueckii subsp. bulgaricus (strain ATCC 11842 / DSM 20081 / BCRC 10696 / JCM 1002 / NBRC 13953 / NCIMB 11778 / NCTC 12712 / WDCM 00102 / Lb 14).